Consider the following 140-residue polypeptide: Probable deoxyuridine 5'-triphosphate nucleotidohydrolase (140 aa).

Substrate contacts are provided by residues 62–64 (RSG), 76–79 (GVID), Arg130, and 135–136 (FG).

The protein belongs to the dUTPase family. In terms of assembly, homotrimer. Mg(2+) serves as cofactor.

It catalyses the reaction dUTP + H2O = dUMP + diphosphate + H(+). Its pathway is pyrimidine metabolism; dUMP biosynthesis; dUMP from dCTP (dUTP route): step 2/2. Functionally, this enzyme is involved in nucleotide metabolism: it produces dUMP, the immediate precursor of thymidine nucleotides and it decreases the intracellular concentration of dUTP so that uracil cannot be incorporated into DNA. The chain is Probable deoxyuridine 5'-triphosphate nucleotidohydrolase from Schizosaccharomyces pombe (strain 972 / ATCC 24843) (Fission yeast).